The sequence spans 419 residues: L-rhamnose isomerase (419 aa).

The Mn(2+) site is built by H262, D294, and D296.

Belongs to the rhamnose isomerase family. In terms of assembly, homotetramer. It depends on Mn(2+) as a cofactor.

It is found in the cytoplasm. It carries out the reaction L-rhamnopyranose = L-rhamnulose. Its pathway is carbohydrate degradation; L-rhamnose degradation; glycerone phosphate from L-rhamnose: step 1/3. Its function is as follows. Catalyzes the interconversion of L-rhamnose and L-rhamnulose. The polypeptide is L-rhamnose isomerase (Escherichia coli O9:H4 (strain HS)).